Here is a 1234-residue protein sequence, read N- to C-terminus: uncharacterized protein (1234 aa).

This is an uncharacterized protein from Schizosaccharomyces pombe (strain 972 / ATCC 24843) (Fission yeast).